A 208-amino-acid polypeptide reads, in one-letter code: Small ribosomal subunit protein uS4 (208 aa).

One can recognise an S4 RNA-binding domain in the interval 95–157 (RRIDNVVYRA…DSLKKLIRSN (63 aa)).

This sequence belongs to the universal ribosomal protein uS4 family. In terms of assembly, part of the 30S ribosomal subunit. Contacts protein S5. The interaction surface between S4 and S5 is involved in control of translational fidelity.

Functionally, one of the primary rRNA binding proteins, it binds directly to 16S rRNA where it nucleates assembly of the body of the 30S subunit. In terms of biological role, with S5 and S12 plays an important role in translational accuracy. The chain is Small ribosomal subunit protein uS4 from Borreliella burgdorferi (strain ATCC 35210 / DSM 4680 / CIP 102532 / B31) (Borrelia burgdorferi).